Here is a 266-residue protein sequence, read N- to C-terminus: MAKHQHKKRFGQNFLNNDRIIQQIVAAIAPKPDQHLVEIGPGEAALTGPLLDIVKKLDIIEIDNDLIGPLTKRFSHNPAFHLHHTDALLFDYSQLLEAETETPSLRIVGNLPYNISSPLLFHLLKYARYIQDMHFMLQKEVVERITAQPGVKAYGRLSVMIQYTCETEYLLTVGPENFTPPPKVDSAIVRLRPFEKRPFQAIDDKDFAKLVKQAFSQKRKTLRNNLKGFLNDEQIEACGLDPSVRAEKVPVEAFVLLSNLYHKDKA.

6 residues coordinate S-adenosyl-L-methionine: Asn-13, Leu-15, Gly-40, Glu-61, Asp-86, and Asn-110.

This sequence belongs to the class I-like SAM-binding methyltransferase superfamily. rRNA adenine N(6)-methyltransferase family. RsmA subfamily.

The protein resides in the cytoplasm. The enzyme catalyses adenosine(1518)/adenosine(1519) in 16S rRNA + 4 S-adenosyl-L-methionine = N(6)-dimethyladenosine(1518)/N(6)-dimethyladenosine(1519) in 16S rRNA + 4 S-adenosyl-L-homocysteine + 4 H(+). Specifically dimethylates two adjacent adenosines (A1518 and A1519) in the loop of a conserved hairpin near the 3'-end of 16S rRNA in the 30S particle. May play a critical role in biogenesis of 30S subunits. The protein is Ribosomal RNA small subunit methyltransferase A of Hydrogenovibrio crunogenus (strain DSM 25203 / XCL-2) (Thiomicrospira crunogena).